The following is a 376-amino-acid chain: MNAIPSASSVQTVHVPLGERAYDILIGPGLIARAGAEIASRLKGRKAAVVTDENVAPLYLQALVASLDEAGIASAAVVLPAGEKTKSFEHLMTACDKVLEARVERNDCVIALGGGVIGDLSGFAAGIVRRGVRFVQVPTSLLAQVDSSVGGKTGINSRHGKNLIGVFHQPDLVLADTDVLNTLSEREFRAGYAEVAKYGLIDKPDFFAWLEANWKAVFTGGAARIEAIAASCQAKADVVVADERENGPRALLNLGHTFGHALETATAYDSSRLVHGEGVSIGMVLAHEFSARMNLASPDDARRVERHLQEVGLPTRMSDIPGALPPAETLMDAIAQDKKVKSGKLTFILTRGIGQSFVADDVPASEVISFLREKHP.

NAD(+) is bound by residues 115 to 119, 139 to 140, K152, and K161; these read GVIGD and TS. The Zn(2+) site is built by E194, H256, and H275.

It belongs to the sugar phosphate cyclases superfamily. Dehydroquinate synthase family. The cofactor is Co(2+). It depends on Zn(2+) as a cofactor. NAD(+) is required as a cofactor.

It localises to the cytoplasm. The catalysed reaction is 7-phospho-2-dehydro-3-deoxy-D-arabino-heptonate = 3-dehydroquinate + phosphate. Its pathway is metabolic intermediate biosynthesis; chorismate biosynthesis; chorismate from D-erythrose 4-phosphate and phosphoenolpyruvate: step 2/7. Its function is as follows. Catalyzes the conversion of 3-deoxy-D-arabino-heptulosonate 7-phosphate (DAHP) to dehydroquinate (DHQ). In Rhizobium leguminosarum bv. trifolii (strain WSM2304), this protein is 3-dehydroquinate synthase.